The primary structure comprises 521 residues: Acidic amino acid decarboxylase GADL1 (521 aa).

Residue Lys-333 is modified to N6-(pyridoxal phosphate)lysine.

The protein belongs to the group II decarboxylase family. As to quaternary structure, homodimer. Pyridoxal 5'-phosphate serves as cofactor. Expressed very weakly in neurons and not detected in astrocytes, brain or liver.

The catalysed reaction is L-aspartate + H(+) = beta-alanine + CO2. It carries out the reaction 3-sulfino-L-alanine + H(+) = hypotaurine + CO2. The enzyme catalyses L-cysteate + H(+) = taurine + CO2. Functionally, may catalyze the decarboxylation of L-aspartate, 3-sulfino-L-alanine (cysteine sulfinic acid), and L-cysteate to beta-alanine, hypotaurine and taurine, respectively. Does not exhibit any decarboxylation activity toward glutamate. This chain is Acidic amino acid decarboxylase GADL1 (GADL1), found in Homo sapiens (Human).